A 99-amino-acid polypeptide reads, in one-letter code: C-C motif chemokine 17 (99 aa).

Residues 1–23 (MIPLKMLLLVTLLLGASLQVTHA) form the signal peptide. 2 disulfide bridges follow: C33-C57 and C34-C73.

Belongs to the intercrine beta (chemokine CC) family. Expressed in thymus, spleen, lymph node, lung and heart.

The protein resides in the secreted. Chemokine, which displays chemotactic activity for T lymphocytes, preferentially Th2 cells, but not monocytes or granulocytes. Therefore plays an important role in a wide range of inflammatory and immunological processes. Acts by binding to CCR4 at T-cell surface. Mediates GM-CSF/CSF2-driven pain and inflammation. In the brain, required to maintain the typical, highly branched morphology of hippocampal microglia under homeostatic conditions. May be important for the appropriate adaptation of microglial morphology and synaptic plasticity to acute lipopolysaccharide (LPS)-induced neuroinflammation. Plays a role in wound healing, mainly by inducing fibroblast migration into the wound. The chain is C-C motif chemokine 17 (CCL17) from Canis lupus familiaris (Dog).